The sequence spans 199 residues: Insertion sequence IS21-like putative ATP-binding protein (199 aa).

114–121 (GDSGTGKT) is a binding site for ATP.

This sequence belongs to the IS21/IS1162 putative ATP-binding protein family.

The sequence is that of Insertion sequence IS21-like putative ATP-binding protein (tnpB) from Bacteroides fragilis (strain YCH46).